The chain runs to 259 residues: Protein FAM220A (259 aa).

A disordered region spans residues 29-66 (GLKRRSEKRNPSPSDVPSWTDQPVADTHGKSRAMAAAS). Over residues 39–49 (PSPSDVPSWTD) the composition is skewed to polar residues.

As to quaternary structure, interacts with transcriptional activator STAT3; the interaction occurs in both the nucleus and the cytoplasm, is enhanced by IL6 and promotes STAT3 dephosphorylation, leading to negative regulation of STAT3 transcriptional activator activity. Can interact with both unphosphorylated and phosphorylated STAT3 but interacts preferentially with phosphorylated STAT3 in the nucleus. Interacts with protein phosphatase PTPN2/TC45; this promotes interaction of PTPN2 with STAT3, leading to dephosphorylation of STAT3 by PTPN2.

It is found in the nucleus. Its subcellular location is the cytoplasm. The protein localises to the cytoplasmic vesicle. It localises to the secretory vesicle. The protein resides in the acrosome. Functionally, promotes dephosphorylation of transcriptional activator STAT3 by interacting with both STAT3 and protein phosphatase PTPN2. This promotes interaction of PTPN2 with STAT3 and mediates STAT3 dephosphorylation by PTPN2, leading to negative regulation of STAT3 transcriptional activator activity. May be required for spermiogenesis or sperm function. The polypeptide is Protein FAM220A (Fam220a) (Rattus norvegicus (Rat)).